The primary structure comprises 115 residues: Transmembrane protein 14C (115 aa).

4 consecutive transmembrane segments (helical) span residues 8 to 28 (LVPL…GGII), 33 to 53 (AGSV…GLGA), 63 to 83 (VWVF…RFYN), and 88 to 108 (MPAG…VAKI).

Belongs to the TMEM14 family.

It is found in the mitochondrion membrane. Required for normal heme biosynthesis. The chain is Transmembrane protein 14C (Tmem14c) from Rattus norvegicus (Rat).